The primary structure comprises 602 residues: Phosphoenolpyruvate carboxykinase [GTP] (602 aa).

Substrate is bound by residues arginine 89 and 211-213; that span reads YAG. Residues lysine 220 and histidine 239 each contribute to the Mn(2+) site. Substrate is bound at residue serine 260. 261-266 serves as a coordination point for GTP; it reads GSGKTS. Residue serine 262 is part of the active site. Residue aspartate 277 coordinates Mn(2+). 367-369 serves as a coordination point for substrate; sequence NAR. Residues arginine 369 and arginine 400 each contribute to the GTP site.

This sequence belongs to the phosphoenolpyruvate carboxykinase [GTP] family. Mn(2+) serves as cofactor.

The protein localises to the cytoplasm. It carries out the reaction oxaloacetate + GTP = phosphoenolpyruvate + GDP + CO2. The protein operates within carbohydrate biosynthesis; gluconeogenesis. In terms of biological role, catalyzes the conversion of oxaloacetate (OAA) to phosphoenolpyruvate (PEP), the rate-limiting step in the metabolic pathway that produces glucose from lactate and other precursors derived from the citric acid cycle. The chain is Phosphoenolpyruvate carboxykinase [GTP] from Sulfurisphaera tokodaii (strain DSM 16993 / JCM 10545 / NBRC 100140 / 7) (Sulfolobus tokodaii).